The following is a 269-amino-acid chain: Ribosomal RNA small subunit methyltransferase A (269 aa).

Residues Asn-20, Leu-22, Gly-47, Glu-68, Asp-90, and Asn-110 each coordinate S-adenosyl-L-methionine.

The protein belongs to the class I-like SAM-binding methyltransferase superfamily. rRNA adenine N(6)-methyltransferase family. RsmA subfamily.

Its subcellular location is the cytoplasm. The enzyme catalyses adenosine(1518)/adenosine(1519) in 16S rRNA + 4 S-adenosyl-L-methionine = N(6)-dimethyladenosine(1518)/N(6)-dimethyladenosine(1519) in 16S rRNA + 4 S-adenosyl-L-homocysteine + 4 H(+). In terms of biological role, specifically dimethylates two adjacent adenosines (A1518 and A1519) in the loop of a conserved hairpin near the 3'-end of 16S rRNA in the 30S particle. May play a critical role in biogenesis of 30S subunits. This chain is Ribosomal RNA small subunit methyltransferase A, found in Chlorobium phaeobacteroides (strain DSM 266 / SMG 266 / 2430).